The sequence spans 72 residues: Large ribosomal subunit protein uL29 (72 aa).

The protein belongs to the universal ribosomal protein uL29 family.

In Microcystis aeruginosa (strain NIES-843 / IAM M-2473), this protein is Large ribosomal subunit protein uL29.